The primary structure comprises 529 residues: NAD(P)H-quinone oxidoreductase chain 4 1 (529 aa).

13 helical membrane passes run 4–24 (FPWLTTIILFPIVAALAIPFI), 36–56 (WYALAVGLIDFALIVYAFTNF), 91–111 (LILLTGFITTLAILAAWPVTL), 115–135 (LFYFLMLAMYGGQIAVFAVQD), 137–157 (LVFFLAWELELIPVYLLLAIW), 169–189 (FILYTAGSSLFILVAGLAMAF), 209–229 (GFQLLVYAGFLVAYGVKLPIV), 243–263 (TAPVHMLLAGILLKMGGYALI), 277–297 (FAPVLVILGVVNIIYAALTSY), 314–334 (IGFVLIGIASFTNLGMSGAVL), 335–355 (QMVSHGLIGASLFFLVGATYD), 387–407 (LALPGMSGFVAELMVFIGFAT), and 417–437 (VIVVFLAAVGVILTPIYLLSM).

It belongs to the complex I subunit 4 family.

It is found in the cellular thylakoid membrane. The enzyme catalyses a plastoquinone + NADH + (n+1) H(+)(in) = a plastoquinol + NAD(+) + n H(+)(out). It carries out the reaction a plastoquinone + NADPH + (n+1) H(+)(in) = a plastoquinol + NADP(+) + n H(+)(out). Functionally, NDH-1 shuttles electrons from NAD(P)H, via FMN and iron-sulfur (Fe-S) centers, to quinones in the respiratory chain. The immediate electron acceptor for the enzyme in this species is believed to be plastoquinone. Couples the redox reaction to proton translocation (for every two electrons transferred, four hydrogen ions are translocated across the cytoplasmic membrane), and thus conserves the redox energy in a proton gradient. The chain is NAD(P)H-quinone oxidoreductase chain 4 1 from Thermosynechococcus vestitus (strain NIES-2133 / IAM M-273 / BP-1).